Here is a 346-residue protein sequence, read N- to C-terminus: Dimethylallyltranstransferase (346 aa).

Residues K96, R99, and H128 each contribute to the isopentenyl diphosphate site. Residues D135 and D141 each coordinate Mg(2+). Residue R147 participates in isopentenyl diphosphate binding.

It belongs to the FPP/GGPP synthase family. Mg(2+) is required as a cofactor.

It carries out the reaction isopentenyl diphosphate + dimethylallyl diphosphate = (2E)-geranyl diphosphate + diphosphate. The protein operates within isoprenoid biosynthesis; geranyl diphosphate biosynthesis; geranyl diphosphate from dimethylallyl diphosphate and isopentenyl diphosphate: step 1/1. Its function is as follows. Prenyltransferase involved in the biosynthesis of ambiguines, a family of hapalindole-type alkaloids. Catalyzes the addition of isopentenyl diphosphate (IPP) onto dimethylallyl diphosphate (DMAPP) to form geranyl pyrophosphate (GPP). Cannot use farnesyl diphosphate (FPP) or geranylgeranyl diphosphate (GGPP). This is Dimethylallyltranstransferase from Fischerella ambigua (strain UTEX 1903).